The sequence spans 159 residues: Keratin-associated protein 11-1 (159 aa).

Repeat copies occupy residues 107-116 (CQPLSGVSTV), 117-126 (CKPVRSISTV), 127-136 (CQPVGGVSTI), and 137-146 (CQPTCGVSRT). The interval 107-146 (CQPLSGVSTVCKPVRSISTVCQPVGGVSTICQPTCGVSRT) is 4 X 10 AA approximate repeats.

Belongs to the PMG family. Wool.

In the wool cortex, wool keratin intermediate filaments are embedded in an interfilamentous matrix, consisting of wool keratin-associated proteins (KRTAP), which are essential for the formation of a rigid and resistant wool shaft through their extensive disulfide bond cross-linking with abundant cysteine residues of wool keratins. The matrix proteins include the high-sulfur and high-glycine-tyrosine keratins. The chain is Keratin-associated protein 11-1 (KRTAP11-1) from Capra hircus (Goat).